Here is a 312-residue protein sequence, read N- to C-terminus: Malate dehydrogenase (312 aa).

Residues glycine 7–glycine 13 and aspartate 34 each bind NAD(+). Positions 81 and 87 each coordinate substrate. NAD(+) contacts are provided by residues asparagine 94 and isoleucine 117–asparagine 119. 2 residues coordinate substrate: asparagine 119 and arginine 153. The active-site Proton acceptor is histidine 177. Methionine 227 provides a ligand contact to NAD(+).

It belongs to the LDH/MDH superfamily. MDH type 1 family. In terms of assembly, homodimer.

It carries out the reaction (S)-malate + NAD(+) = oxaloacetate + NADH + H(+). Its function is as follows. Catalyzes the reversible oxidation of malate to oxaloacetate. This Salmonella choleraesuis (strain SC-B67) protein is Malate dehydrogenase.